The sequence spans 187 residues: Large ribosomal subunit protein bL17 (187 aa).

The interval 122-187 is disordered; the sequence is PKVRSSRTST…EADAAEKSDK (66 aa). Residues 127 to 144 are compositionally biased toward low complexity; the sequence is SRTSTATAPAAAAPAAEA. Composition is skewed to acidic residues over residues 145 to 157 and 165 to 180; these read PAEESDVPVEETD and TPAETTDEAAAEVEAD.

Belongs to the bacterial ribosomal protein bL17 family. Part of the 50S ribosomal subunit. Contacts protein L32.

The protein is Large ribosomal subunit protein bL17 of Clavibacter michiganensis subsp. michiganensis (strain NCPPB 382).